The chain runs to 150 residues: Large ribosomal subunit protein uL15 (150 aa).

The interval 12 to 43 is disordered; that stretch reads AKKRKKRVGCGESSGHGKTSGRGHKGQKARAG. Residues 30-39 are compositionally biased toward basic residues; that stretch reads TSGRGHKGQK.

It belongs to the universal ribosomal protein uL15 family. Part of the 50S ribosomal subunit.

Its function is as follows. Binds to the 23S rRNA. This chain is Large ribosomal subunit protein uL15, found in Methylacidiphilum infernorum (isolate V4) (Methylokorus infernorum (strain V4)).